We begin with the raw amino-acid sequence, 193 residues long: Cysteine and glycine-rich protein 2 (193 aa).

Residues 10–61 form the LIM zinc-binding 1 domain; sequence CGACGRTVYHAEEVQCDGRSFHRCCFLCMVCRKNLDSTTVAIHDEEIYCKSC. Residues 64 to 69 carry the Nuclear localization signal motif; it reads KKYGPK. Lys91 participates in a covalent cross-link: Glycyl lysine isopeptide (Lys-Gly) (interchain with G-Cter in SUMO2). Lys112 and Lys131 each carry N6-acetyllysine. Positions 119-170 constitute an LIM zinc-binding 2 domain; that stretch reads CSRCGDSVYAAEKIIGAGKPWHKNCFRCAKCGKSLESTTLTEKEGEIYCKGC. N6-acetyllysine; alternate is present on Lys137. Residue Lys137 is modified to N6-succinyllysine; alternate. At Lys161 the chain carries N6-acetyllysine.

As to quaternary structure, interacts with KAT14. The LIM domain 1 is necessary and sufficient for this interaction. Interacts with GLRX3.

Its subcellular location is the nucleus. Functionally, drastically down-regulated in response to PDGF-BB or cell injury, that promote smooth muscle cell proliferation and dedifferentiation. Seems to play a role in the development of the embryonic vascular system. In Mus musculus (Mouse), this protein is Cysteine and glycine-rich protein 2 (Csrp2).